The chain runs to 864 residues: DNA mismatch repair protein MutS (864 aa).

Gly-613–Ser-620 lines the ATP pocket.

The protein belongs to the DNA mismatch repair MutS family.

This protein is involved in the repair of mismatches in DNA. It is possible that it carries out the mismatch recognition step. This protein has a weak ATPase activity. This chain is DNA mismatch repair protein MutS, found in Actinobacillus pleuropneumoniae serotype 7 (strain AP76).